The chain runs to 260 residues: MAFVPPQAGYDRAITVFSPDGRLFQVNYAREAVKRGATAVGVKWKEGVVLAVEKRITSKLIEPSSYEKIFQIDDHIAAAPSGIIADARVLVDRARLEAQVYRLTYGEPVPLTVLVKKICDLKQAHTQYGGVRPFGAALLMAGVNDKPELYETDPSGAYFEWRAVAIGSGRNTAMAIFEDHYSDDLDMEGAIKLAILALAKTLEEPSPESIEVAYITMKDKRWKKMDKEEVAKYLGEILEEIKEEEVEEKEEDYSELDSNY.

Belongs to the peptidase T1A family. As to quaternary structure, the 20S proteasome core is composed of 14 alpha and 14 beta subunits that assemble into four stacked heptameric rings, resulting in a barrel-shaped structure. The two inner rings, each composed of seven catalytic beta subunits, are sandwiched by two outer rings, each composed of seven alpha subunits. The catalytic chamber with the active sites is on the inside of the barrel. Has a gated structure, the ends of the cylinder being occluded by the N-termini of the alpha-subunits. Is capped at one or both ends by the proteasome regulatory ATPase, PAN.

The protein localises to the cytoplasm. With respect to regulation, the formation of the proteasomal ATPase PAN-20S proteasome complex, via the docking of the C-termini of PAN into the intersubunit pockets in the alpha-rings, triggers opening of the gate for substrate entry. Interconversion between the open-gate and close-gate conformations leads to a dynamic regulation of the 20S proteasome proteolysis activity. In terms of biological role, component of the proteasome core, a large protease complex with broad specificity involved in protein degradation. This is Proteasome subunit alpha from Thermococcus onnurineus (strain NA1).